We begin with the raw amino-acid sequence, 518 residues long: Membrane-bound lytic murein transglycosylase F (518 aa).

The N-terminal stretch at 1-21 (MKKLKINYLFIGILALLLAVA) is a signal peptide. A non-LT domain region spans residues 22–269 (LWPSIPWFGK…RIEEKYLGHG (248 aa)). Residues 270–518 (DDFDYVDTRT…SRKGSEEKQN (249 aa)) form an LT domain region. Glu-314 is a catalytic residue.

In the N-terminal section; belongs to the bacterial solute-binding protein 3 family. This sequence in the C-terminal section; belongs to the transglycosylase Slt family.

It localises to the cell outer membrane. It carries out the reaction Exolytic cleavage of the (1-&gt;4)-beta-glycosidic linkage between N-acetylmuramic acid (MurNAc) and N-acetylglucosamine (GlcNAc) residues in peptidoglycan, from either the reducing or the non-reducing ends of the peptidoglycan chains, with concomitant formation of a 1,6-anhydrobond in the MurNAc residue.. In terms of biological role, murein-degrading enzyme that degrades murein glycan strands and insoluble, high-molecular weight murein sacculi, with the concomitant formation of a 1,6-anhydromuramoyl product. Lytic transglycosylases (LTs) play an integral role in the metabolism of the peptidoglycan (PG) sacculus. Their lytic action creates space within the PG sacculus to allow for its expansion as well as for the insertion of various structures such as secretion systems and flagella. The sequence is that of Membrane-bound lytic murein transglycosylase F from Escherichia coli O6:H1 (strain CFT073 / ATCC 700928 / UPEC).